We begin with the raw amino-acid sequence, 1072 residues long: Neurofilament heavy polypeptide (1072 aa).

Ser-74 is subject to Phosphoserine. In terms of domain architecture, IF rod spans 94–409 (EKEQLQALND…KLLEGEECRI (316 aa)). Coiled coils occupy residues 98–132 (LQAL…LRQQ), 174–222 (IAHV…LQEE), and 293–380 (LDRL…QLRE). The segment at 278 to 643 (TVQSTLQSEE…AKSPAEAKSP (366 aa)) is 55 X 6 AA approximate tandem repeats of K-S-P-[VAGSE]-[KEVTSGA]-[EAVK]. Ser-343, Ser-414, and Ser-417 each carry phosphoserine. The segment at 454-1072 (EEQTEEIQVT…PEDKAAKGDK (619 aa)) is disordered. Residues 455-487 (EQTEEIQVTEEVTEEEDKEAQGEEEEEAEEGGE) are compositionally biased toward acidic residues. Positions 488–499 (EAATTSPPAEEA) are enriched in low complexity. At Ser-501 the chain carries Phosphoserine. Basic and acidic residues predominate over residues 501–584 (SPEKETKSPV…KSPAEAKSPA (84 aa)). 36 consecutive repeat copies span residues 507–512 (KSPVKE), 515–520 (KSPAEA), 521–526 (KSPAEA), 527–532 (KSPAEA), 533–538 (KSPAEV), 539–544 (KSPAEV), 545–550 (KSPAEA), 551–556 (KSPAEA), 557–562 (KSPAEV), 563–568 (KSPAEV), 569–574 (KSPAEA), 575–580 (KSPAEA), 581–586 (KSPAEV), 587–592 (KSPATV), 593–598 (KSPGEA), 599–604 (KSPAEA), 605–610 (KSPAEV), 611–616 (KSPVEA), 617–622 (KSPAEA), 623–628 (KSPASV), 629–634 (KSPGEA), 635–640 (KSPAEA), 641–646 (KSPAEV), 647–652 (KSPATV), 653–658 (KSPVEA), 659–664 (KSPAEV), 665–670 (KSPVTV), 671–676 (KSPAEA), 677–682 (KSPVEV), 683–688 (KSPASV), 689–694 (KSPSEA), 695–700 (KSPAGA), 701–706 (KSPAEA), 707–712 (KSPVVA), 713–718 (KSPAEA), and 719–724 (KSPAEA). Phosphoserine is present on residues Ser-516, Ser-522, Ser-528, Ser-534, Ser-540, Ser-546, Ser-552, Ser-558, Ser-564, Ser-570, Ser-576, Ser-582, Ser-588, Ser-594, Ser-600, Ser-606, Ser-612, Ser-618, Ser-624, Ser-627, Ser-630, Ser-636, Ser-642, Ser-648, Ser-654, Ser-660, Ser-666, Ser-672, Ser-678, Ser-684, Ser-687, Ser-690, Ser-696, Ser-702, Ser-708, Ser-714, and Ser-720. Residues 600-620 (SPAEAKSPAEVKSPVEAKSPA) show a composition bias toward basic and acidic residues. Residues 621–631 (EAKSPASVKSP) are compositionally biased toward low complexity. Residues 720 to 774 (SPAEAKPPAEAKSPAEAKSPAEAKSPAEAKSPAEAKSPVEVKSPEKAKSPVKEGA) show a composition bias toward basic and acidic residues. The 37; approximate repeat unit spans residues 725–730 (KPPAEA). A run of 7 repeats spans residues 731–736 (KSPAEA), 737–742 (KSPAEA), 743–748 (KSPAEA), 749–754 (KSPAEA), 755–760 (KSPVEV), 761–766 (KSPEKA), and 767–772 (KSPVKE). Phosphoserine is present on residues Ser-732, Ser-738, Ser-744, Ser-750, Ser-756, and Ser-762. One copy of the 45; approximate repeat lies at 775 to 780 (KSLAEA). A phosphoserine mark is found at Ser-776, Ser-782, and Ser-788. Repeat copies occupy residues 781–786 (KSPEKA) and 787–792 (KSPVKE). Basic and acidic residues-rich tracts occupy residues 781–953 (KSPE…KAAA) and 963–1072 (GVKE…KGDK). Residues 795–800 (KPPAEV) form a 48; approximate repeat. Repeat copies occupy residues 801–806 (KSPEKA), 807–812 (KSPMKE), 815–820 (KSPEKA), and 826–831 (KSPEAK). A phosphoserine mark is found at Ser-802, Ser-808, Ser-816, and Ser-827. A Phosphothreonine modification is found at Thr-832. Phosphoserine is present on residues Ser-846, Ser-852, Ser-860, Ser-880, and Ser-937. 3 consecutive repeat copies span residues 851–856 (KSPAKE), 859–864 (KSPEKE), and 879–884 (KSPVEE).

Belongs to the intermediate filament family. Forms heterodimers with NEFL; which can further hetero-oligomerize (in vitro). Forms heterodimers with INA (in vitro). Post-translationally, there are a number of repeats of the tripeptide K-S-P, NFH is phosphorylated on a number of the serines in this motif. It is thought that phosphorylation of NFH results in the formation of interfilament cross bridges that are important in the maintenance of axonal caliber. In terms of processing, phosphorylation seems to play a major role in the functioning of the larger neurofilament polypeptides (NF-M and NF-H), the levels of phosphorylation being altered developmentally and coincidentally with a change in the neurofilament function. Phosphorylated in the head and rod regions by the PKC kinase PKN1, leading to the inhibition of polymerization. As to expression, expressed in the dorsal root ganglion neurons (at protein level). Expressed in cutaneous and muscular sensory neurons.

It is found in the cytoplasm. It localises to the cytoskeleton. Its subcellular location is the cell projection. The protein localises to the axon. In terms of biological role, neurofilaments usually contain three intermediate filament proteins: NEFL, NEFM, and NEFH which are involved in the maintenance of neuronal caliber. NEFH has an important function in mature axons that is not subserved by the two smaller NEF proteins. May additionally cooperate with the neuronal intermediate filament proteins PRPH and INA to form neuronal filamentous networks. This Rattus norvegicus (Rat) protein is Neurofilament heavy polypeptide (Nefh).